Here is a 543-residue protein sequence, read N- to C-terminus: CTP synthase (543 aa).

An amidoligase domain region spans residues Met1 to Leu267. Residue Ser13 coordinates CTP. Ser13 contacts UTP. Residue Ser14–Ile19 participates in ATP binding. Tyr54 is an L-glutamine binding site. ATP is bound at residue Asp71. Positions 71 and 141 each coordinate Mg(2+). CTP contacts are provided by residues Asp148–Glu150, Lys188–Gln193, and Lys224. Residues Lys188 to Gln193 and Lys224 contribute to the UTP site. The 243-residue stretch at Lys292–Asn534 folds into the Glutamine amidotransferase type-1 domain. Gly354 contributes to the L-glutamine binding site. The active-site Nucleophile; for glutamine hydrolysis is the Cys381. Residues Leu382–Gln385, Glu405, and Arg462 each bind L-glutamine. Active-site residues include His507 and Glu509.

Belongs to the CTP synthase family. In terms of assembly, homotetramer.

The enzyme catalyses UTP + L-glutamine + ATP + H2O = CTP + L-glutamate + ADP + phosphate + 2 H(+). It catalyses the reaction L-glutamine + H2O = L-glutamate + NH4(+). It carries out the reaction UTP + NH4(+) + ATP = CTP + ADP + phosphate + 2 H(+). It functions in the pathway pyrimidine metabolism; CTP biosynthesis via de novo pathway; CTP from UDP: step 2/2. Its activity is regulated as follows. Allosterically activated by GTP, when glutamine is the substrate; GTP has no effect on the reaction when ammonia is the substrate. The allosteric effector GTP functions by stabilizing the protein conformation that binds the tetrahedral intermediate(s) formed during glutamine hydrolysis. Inhibited by the product CTP, via allosteric rather than competitive inhibition. Catalyzes the ATP-dependent amination of UTP to CTP with either L-glutamine or ammonia as the source of nitrogen. Regulates intracellular CTP levels through interactions with the four ribonucleotide triphosphates. In Synechococcus sp. (strain WH7803), this protein is CTP synthase.